A 577-amino-acid chain; its full sequence is Sulfite reductase [NADPH] hemoprotein beta-component (577 aa).

[4Fe-4S] cluster is bound by residues Cys440, Cys446, Cys486, and Cys490. Residue Cys490 participates in siroheme binding.

It belongs to the nitrite and sulfite reductase 4Fe-4S domain family. Alpha(8)-beta(8). The alpha component is a flavoprotein, the beta component is a hemoprotein. Siroheme is required as a cofactor. It depends on [4Fe-4S] cluster as a cofactor.

The catalysed reaction is hydrogen sulfide + 3 NADP(+) + 3 H2O = sulfite + 3 NADPH + 4 H(+). It participates in sulfur metabolism; hydrogen sulfide biosynthesis; hydrogen sulfide from sulfite (NADPH route): step 1/1. Component of the sulfite reductase complex that catalyzes the 6-electron reduction of sulfite to sulfide. This is one of several activities required for the biosynthesis of L-cysteine from sulfate. The polypeptide is Sulfite reductase [NADPH] hemoprotein beta-component (Vibrio cholerae serotype O1 (strain ATCC 39315 / El Tor Inaba N16961)).